The primary structure comprises 805 residues: Leucine--tRNA ligase (805 aa).

The 'HIGH' region motif lies at 40 to 51 (PYPSGSGLHVGH). The 'KMSKS' region signature appears at 576–580 (KMSKS). Lysine 579 contributes to the ATP binding site.

Belongs to the class-I aminoacyl-tRNA synthetase family.

It localises to the cytoplasm. The enzyme catalyses tRNA(Leu) + L-leucine + ATP = L-leucyl-tRNA(Leu) + AMP + diphosphate. This chain is Leucine--tRNA ligase, found in Chlorobium limicola (strain DSM 245 / NBRC 103803 / 6330).